A 436-amino-acid polypeptide reads, in one-letter code: Protein arginine methyltransferase NDUFAF7, mitochondrial (436 aa).

The N-terminal 41 residues, 1-41 (MNALVRRCVARAGLPCIWRGKCYSSGNEPAESNQVTPMLRH), are a transit peptide targeting the mitochondrion. Positions 411 to 436 (GSQERNACQSKTPSSSVAGFDELVWQ) are disordered. A compositionally biased stretch (polar residues) spans 413-427 (QERNACQSKTPSSSV).

This sequence belongs to the NDUFAF7 family. Interacts with NDUFS2.

It is found in the mitochondrion. The enzyme catalyses L-arginyl-[protein] + 2 S-adenosyl-L-methionine = N(omega),N(omega)'-dimethyl-L-arginyl-[protein] + 2 S-adenosyl-L-homocysteine + 2 H(+). Arginine methyltransferase involved in the assembly or stability of mitochondrial NADH:ubiquinone oxidoreductase complex (complex I). Acts by mediating symmetric dimethylation of 'Arg-118' of NDUFS2 after it assembles into the complex I, stabilizing the early intermediate complex. The protein is Protein arginine methyltransferase NDUFAF7, mitochondrial of Mus musculus (Mouse).